A 61-amino-acid chain; its full sequence is [Thr6, Val10, Asp11]-phyllokinin (61 aa).

An N-terminal signal peptide occupies residues 1 to 22; that stretch reads MSFLKKSLFLVLFLGLVSFSIC. The propeptide occupies 23–50; it reads EEEKRETEEEENEDEMNEESEEKRESPE. The disordered stretch occupies residues 24 to 61; that stretch reads EEKRETEEEENEDEMNEESEEKRESPERPPGFTPFRVD. Residues 30–42 show a composition bias toward acidic residues; sequence EEEENEDEMNEES.

Belongs to the frog skin active peptide (FSAP) family. Bradykinin-related peptide subfamily. Expressed by the skin glands.

Its subcellular location is the secreted. Functionally, induces relaxation of rat smooth muscle from tail artery and contraction of that from ileum, urinary bladder and uterus. Binds to both bradykinin receptor B1 (BDKRB1) and B2 (BDKRB2). The polypeptide is [Thr6, Val10, Asp11]-phyllokinin (Agalychnis spurrelli (Gliding leaf frog)).